We begin with the raw amino-acid sequence, 379 residues long: Stimulator of interferon genes protein (379 aa).

The Cytoplasmic portion of the chain corresponds to 1 to 23; the sequence is MPQDPSTRSSPARLLIPEPRAGR. Residues 24–40 traverse the membrane as a helical segment; the sequence is ARHAACVLLAVCFVVLF. The Lumenal portion of the chain corresponds to 41–50; that stretch reads LSGEPLAPII. The chain crosses the membrane as a helical span at residues 51–75; that stretch reads RSVCTQLAALQLGVLLKGCCCLAEE. Residues 76–97 are Cytoplasmic-facing; it reads IFHLHSRHHGSLWQVLCSCFPP. A helical transmembrane segment spans residues 98–111; the sequence is RWYLALLLVGGSAY. The Lumenal segment spans residues 112 to 121; it reads LDPPEDNGHS. The chain crosses the membrane as a helical span at residues 122 to 139; sequence PRLALTLSCLCQLLVLAL. The Cytoplasmic portion of the chain corresponds to 140 to 379; sequence GLQKLSAVEV…LPQPLRSDCP (240 aa). The tract at residues 158–345 is cyclic dinucleotide-binding domain (CBD); that stretch reads KNVAHGLAWS…WHLQQQQREE (188 aa). 3',3'-c-di-GMP is bound by residues serine 167, tyrosine 172, 243–246, and serine 268; that span reads RVYK. 2',3'-cGAMP is bound by residues 167–172, 243–246, and serine 268; these read SYYIGY and RVYK. The pLxIS motif motif lies at 363-366; that stretch reads LQVS. Serine 366 carries the phosphoserine; by TBK1 modification.

Belongs to the STING family. In terms of assembly, homodimer; forms a homodimer in absence of cyclic nucleotide (c-di-GMP or cGAMP). Homotetramer; in presence of cyclic nucleotide (c-di-GMP or cGAMP), forms tetramers and higher-order oligomers through side-by-side packing. Interacts (when phosphorylated) with IRF3; following activation and phosphorylation on the pLxIS motif by TBK1, recruits IRF3. In terms of processing, phosphorylation by TBK1 leads to activation and production of IFN-beta. Following cyclic nucleotide (c-di-GMP or cGAMP)-binding, activation and translocation from the endoplasmic reticulum, STING1 is phosphorylated by TBK1 at Ser-366 in the pLxIS motif. The phosphorylated pLxIS motif constitutes an IRF3-binding motif, leading to recruitment of the transcription factor IRF3 to induce type-I interferons and other cytokines.

The protein localises to the endoplasmic reticulum membrane. It localises to the cytoplasm. Its subcellular location is the perinuclear region. It is found in the endoplasmic reticulum-Golgi intermediate compartment membrane. The protein resides in the golgi apparatus membrane. The protein localises to the cytoplasmic vesicle. It localises to the autophagosome membrane. It carries out the reaction H(+)(in) = H(+)(out). In terms of biological role, facilitator of innate immune signaling that acts as a sensor of cytosolic DNA from bacteria and viruses and promotes the production of type I interferon (IFN-alpha and IFN-beta). Innate immune response is triggered in response to non-CpG double-stranded DNA from viruses and bacteria delivered to the cytoplasm. Acts by binding cyclic dinucleotides: recognizes and binds cyclic di-GMP (c-di-GMP), a second messenger produced by bacteria, and cyclic GMP-AMP (cGAMP), a messenger produced by CGAS in response to DNA virus in the cytosol. Upon binding of c-di-GMP or cGAMP, STING1 oligomerizes and is able to activate both NF-kappa-B and IRF3 transcription pathways to induce expression of type I interferon and exert a potent anti-viral state. Exhibits 2',3' phosphodiester linkage-specific ligand recognition: can bind both 2'-3' linked cGAMP and 3'-3' linked cGAMP but is preferentially activated by 2'-3' linked cGAMP. In addition to promote the production of type I interferons, plays a direct role in autophagy. Following cGAMP-binding, STING1 buds from the endoplasmic reticulum into COPII vesicles, which then form the endoplasmic reticulum-Golgi intermediate compartment (ERGIC). The ERGIC serves as the membrane source for LC3 lipidation, leading to formation of autophagosomes that target cytosolic DNA or DNA viruses for degradation by the lysosome. Promotes autophagy by acting as a proton channel that directs proton efflux from the Golgi to facilitate LC3 lipidation. The autophagy- and interferon-inducing activities can be uncoupled and autophagy induction is independent of TBK1 phosphorylation. The polypeptide is Stimulator of interferon genes protein (Gallus gallus (Chicken)).